The sequence spans 214 residues: Probable nicotinate-nucleotide adenylyltransferase (214 aa).

It belongs to the NadD family.

It carries out the reaction nicotinate beta-D-ribonucleotide + ATP + H(+) = deamido-NAD(+) + diphosphate. Its pathway is cofactor biosynthesis; NAD(+) biosynthesis; deamido-NAD(+) from nicotinate D-ribonucleotide: step 1/1. Functionally, catalyzes the reversible adenylation of nicotinate mononucleotide (NaMN) to nicotinic acid adenine dinucleotide (NaAD). This Thermomicrobium roseum (strain ATCC 27502 / DSM 5159 / P-2) protein is Probable nicotinate-nucleotide adenylyltransferase.